A 290-amino-acid chain; its full sequence is Protease HtpX homolog (290 aa).

A run of 2 helical transmembrane segments spans residues 4–24 (IFLF…VLSL) and 39–59 (PMLL…SLLI). Histidine 144 is a Zn(2+) binding site. Glutamate 145 is an active-site residue. Zn(2+) is bound at residue histidine 148. Transmembrane regions (helical) follow at residues 159 to 179 (LVQG…GYFV) and 197 to 217 (ITVI…VAWF). Glutamate 222 is a binding site for Zn(2+).

It belongs to the peptidase M48B family. Requires Zn(2+) as cofactor.

The protein localises to the cell inner membrane. This Janthinobacterium sp. (strain Marseille) (Minibacterium massiliensis) protein is Protease HtpX homolog.